The sequence spans 540 residues: Phenylalanine--tRNA ligase beta subunit (540 aa).

The B5 domain occupies 268-343; it reads LQHKSIKITA…ITYGYNNLSP (76 aa). Aspartate 321, aspartate 327, glutamate 330, and glutamate 331 together coordinate Mg(2+).

Belongs to the phenylalanyl-tRNA synthetase beta subunit family. Type 2 subfamily. As to quaternary structure, tetramer of two alpha and two beta subunits. Requires Mg(2+) as cofactor.

The protein localises to the cytoplasm. The enzyme catalyses tRNA(Phe) + L-phenylalanine + ATP = L-phenylalanyl-tRNA(Phe) + AMP + diphosphate + H(+). This chain is Phenylalanine--tRNA ligase beta subunit, found in Sulfurisphaera tokodaii (strain DSM 16993 / JCM 10545 / NBRC 100140 / 7) (Sulfolobus tokodaii).